The sequence spans 369 residues: 3-dehydroquinate synthase (369 aa).

Residues 75–80 (DGEEHK), 109–113 (GVIGD), 133–134 (TT), Lys-146, Lys-155, and 173–176 (TLKT) each bind NAD(+). Glu-188, His-251, and His-268 together coordinate Zn(2+).

This sequence belongs to the sugar phosphate cyclases superfamily. Dehydroquinate synthase family. Requires Co(2+) as cofactor. Zn(2+) serves as cofactor. The cofactor is NAD(+).

It localises to the cytoplasm. It catalyses the reaction 7-phospho-2-dehydro-3-deoxy-D-arabino-heptonate = 3-dehydroquinate + phosphate. The protein operates within metabolic intermediate biosynthesis; chorismate biosynthesis; chorismate from D-erythrose 4-phosphate and phosphoenolpyruvate: step 2/7. Functionally, catalyzes the conversion of 3-deoxy-D-arabino-heptulosonate 7-phosphate (DAHP) to dehydroquinate (DHQ). The sequence is that of 3-dehydroquinate synthase from Legionella pneumophila (strain Lens).